A 161-amino-acid polypeptide reads, in one-letter code: Thy-1 membrane glycoprotein (161 aa).

The signal sequence occupies residues 1–19 (MNPVISITLLLSVLQMSRG). Gln-20 is subject to Pyrrolidone carboxylic acid. Residues 20 to 126 (QRVISLTACL…NKTINVIRDK (107 aa)) form the Ig-like V-type domain. 2 disulfide bridges follow: Cys-28-Cys-130 and Cys-38-Cys-104. Asn-42 is a glycosylation site (N-linked (GlcNAc...) (complex) asparagine; alternate). Asn-42 carries N-linked (GlcNAc...) (high mannose) asparagine; alternate glycosylation. An N-linked (GlcNAc...) asparagine; alternate glycan is attached at Asn-42. At Ser-82 the chain carries Phosphoserine. Asn-93 carries an N-linked (GlcNAc...) (complex) asparagine; alternate glycan. The N-linked (GlcNAc...) asparagine; alternate glycan is linked to Asn-93. The N-linked (GlcNAc...) (high mannose) asparagine; in brain; alternate glycan is linked to Asn-117. N-linked (GlcNAc...) (hybrid) asparagine; in brain; alternate glycosylation is present at Asn-117. The GPI-anchor amidated cysteine moiety is linked to residue Cys-130. Positions 131–161 (GGISLLVQNTSWLLLLLLSLSFLQATDFISL) are cleaved as a propeptide — removed in mature form.

Post-translationally, glycosylation is tissue specific. Sialylation of N-glycans at Asn-93 in brain and at Asn-42, Asn-93 and Asn-117 in thymus. In terms of tissue distribution, abundant in lymphoid tissues.

The protein localises to the cell membrane. In terms of biological role, may play a role in cell-cell or cell-ligand interactions during synaptogenesis and other events in the brain. This chain is Thy-1 membrane glycoprotein (Thy1), found in Rattus norvegicus (Rat).